A 313-amino-acid chain; its full sequence is MMENYKHTTVLLDEAVNGLNIRPDGIYIDGTFGRGGHSRLILSQLGEEGRLLAIDRDPQAIAVAKTIDDPRFSIIHGPFSALGEYVAERDLIGKIDGILLDLGVSSPQLDDAERGFSFMRDGPLDMRMDPTRGQSAAEWLQTAEEADIAWVLKTYGEERFAKRIARAIVERNREQPMTRTKELAEVVAAATPVKDKFKHPATRTFQAVRIWVNSELEEIEQALKSSLNVLASGGRLSIISFHSLEDRIVKRFMRENSRGPQVPAGLPMTEEQLKKLGGRQLRALGKLMPGEEEVAENPRARSSVLRIAERTNA.

S-adenosyl-L-methionine is bound by residues 35–37, Asp-55, Phe-79, Asp-101, and Gln-108; that span reads GGH.

The protein belongs to the methyltransferase superfamily. RsmH family.

The protein localises to the cytoplasm. It carries out the reaction cytidine(1402) in 16S rRNA + S-adenosyl-L-methionine = N(4)-methylcytidine(1402) in 16S rRNA + S-adenosyl-L-homocysteine + H(+). In terms of biological role, specifically methylates the N4 position of cytidine in position 1402 (C1402) of 16S rRNA. This chain is Ribosomal RNA small subunit methyltransferase H, found in Escherichia coli O127:H6 (strain E2348/69 / EPEC).